The chain runs to 234 residues: Glucosamine-6-phosphate deaminase (234 aa).

The Proton acceptor; for enolization step role is filled by Asp-62. Residue Asn-128 is the For ring-opening step of the active site. Catalysis depends on His-130, which acts as the Proton acceptor; for ring-opening step. The For ring-opening step role is filled by Glu-135.

The protein belongs to the glucosamine/galactosamine-6-phosphate isomerase family. NagB subfamily.

The enzyme catalyses alpha-D-glucosamine 6-phosphate + H2O = beta-D-fructose 6-phosphate + NH4(+). It functions in the pathway amino-sugar metabolism; N-acetylneuraminate degradation; D-fructose 6-phosphate from N-acetylneuraminate: step 5/5. In terms of biological role, catalyzes the reversible isomerization-deamination of glucosamine 6-phosphate (GlcN6P) to form fructose 6-phosphate (Fru6P) and ammonium ion. In Streptococcus pyogenes serotype M3 (strain ATCC BAA-595 / MGAS315), this protein is Glucosamine-6-phosphate deaminase.